The following is a 622-amino-acid chain: Probable potassium transport system protein Kup (622 aa).

The next 12 membrane-spanning stretches (helical) occupy residues 8–28, 50–70, 103–123, 137–157, 169–189, 215–235, 247–267, 285–305, 337–357, 366–386, 393–413, and 419–439; these read LAAL…TSVL, VLSI…VVLV, LGIG…TPAI, PHFG…LFAV, FGPV…PHIV, FIIL…YADL, WFSV…ALLL, ALIP…QALI, IYIP…VVMF, AYGI…FFVI, PLAL…AFFG, and LLQG…LMMT.

Belongs to the HAK/KUP transporter (TC 2.A.72) family.

It is found in the cell inner membrane. The catalysed reaction is K(+)(in) + H(+)(in) = K(+)(out) + H(+)(out). In terms of biological role, transport of potassium into the cell. Likely operates as a K(+):H(+) symporter. This Paracidovorax citrulli (strain AAC00-1) (Acidovorax citrulli) protein is Probable potassium transport system protein Kup.